The following is a 167-amino-acid chain: MQMMLMFLLLLAAIMVIRATSPYYGALATAWLALLAALLLLDADIIFPAIILMLIYLGGMLVVFIYSTAYAADLMPLPINLTMSALMASFGVMLITMISSPSIETLCETKPWLVYDMQPSYMLFDIYQRGSSMFIVAVMILTALLFSILEVVSHRQTTMKWFIHSTY.

4 consecutive transmembrane segments (helical) span residues 21 to 41 (SPYYGALATAWLALLAALLLL), 45 to 65 (IIFPAIILMLIYLGGMLVVFI), 78 to 98 (PINLTMSALMASFGVMLITMI), and 132 to 152 (SMFIVAVMILTALLFSILEVV).

The protein belongs to the complex I subunit 6 family.

It is found in the mitochondrion membrane. It carries out the reaction a ubiquinone + NADH + 5 H(+)(in) = a ubiquinol + NAD(+) + 4 H(+)(out). Core subunit of the mitochondrial membrane respiratory chain NADH dehydrogenase (Complex I) that is believed to belong to the minimal assembly required for catalysis. Complex I functions in the transfer of electrons from NADH to the respiratory chain. The immediate electron acceptor for the enzyme is believed to be ubiquinone. This Branchiostoma floridae (Florida lancelet) protein is NADH-ubiquinone oxidoreductase chain 6 (ND6).